Consider the following 532-residue polypeptide: Flavin-containing monooxygenase 1 (532 aa).

At 1–510 (MVKRVAIVGA…TRTIQESPSS (510 aa)) the chain is on the lumenal side. FAD is bound by residues 9–13 (GAGVS), glutamate 32, 40–41 (LW), and 61–62 (NS). Residues 60 to 61 (SN) and 195 to 198 (SGTD) contribute to the NADP(+) site. Residues 511-531 (FETLLKLFSFLALLIAVFLIF) form a helical membrane-spanning segment. Position 532 (leucine 532) is a topological domain, cytoplasmic.

The protein belongs to the FMO family. The cofactor is FAD. In terms of tissue distribution, liver.

Its subcellular location is the endoplasmic reticulum membrane. It catalyses the reaction hypotaurine + NADPH + O2 + H(+) = taurine + NADP(+) + H2O. The enzyme catalyses hypotaurine + NADH + O2 + H(+) = taurine + NAD(+) + H2O. It carries out the reaction trimethylamine + NADPH + O2 = trimethylamine N-oxide + NADP(+) + H2O. The catalysed reaction is N,N-dimethylaniline + NADPH + O2 + H(+) = N,N-dimethylaniline N-oxide + NADP(+) + H2O. In terms of biological role, broad spectrum monooxygenase that catalyzes the oxygenation of a wide variety of nitrogen- and sulfur-containing compounds including xenobiotics. Catalyzes the S-oxygenation of hypotaurine to produce taurine, an organic osmolyte involved in cell volume regulation as well as a variety of cytoprotective and developmental processes. In vitro, catalyzes the N-oxygenation of trimethylamine (TMA) to produce trimethylamine N-oxide (TMAO) and could therefore participate to the detoxification of this compound that is generated by the action of gut microbiota from dietary precursors such as choline, choline containing compounds, betaine or L-carnitine. The chain is Flavin-containing monooxygenase 1 from Mus musculus (Mouse).